Here is a 328-residue protein sequence, read N- to C-terminus: Methionyl-tRNA formyltransferase (328 aa).

(6S)-5,6,7,8-tetrahydrofolate is bound at residue 110-113 (SLLP).

This sequence belongs to the Fmt family.

It catalyses the reaction L-methionyl-tRNA(fMet) + (6R)-10-formyltetrahydrofolate = N-formyl-L-methionyl-tRNA(fMet) + (6S)-5,6,7,8-tetrahydrofolate + H(+). Attaches a formyl group to the free amino group of methionyl-tRNA(fMet). The formyl group appears to play a dual role in the initiator identity of N-formylmethionyl-tRNA by promoting its recognition by IF2 and preventing the misappropriation of this tRNA by the elongation apparatus. This is Methionyl-tRNA formyltransferase from Prochlorococcus marinus subsp. pastoris (strain CCMP1986 / NIES-2087 / MED4).